The chain runs to 254 residues: MSTQLDNITSAETAPDYLDEVPDDVEMSLFDHLDELRTRIFLSLGAVLVGVVACFIFVKPLVQWLQVPAGTVKFLQLSPGEFFFVSVKVAGYSGILVMSPFILYQIIQFVLPGLTRRERRLLGPVVLGSSVLFFAGLGFAYYALIPAALKFFVSYGADVVEQLWSIDKYFEFVLLLMFSTGLAFQIPIIQVVLGFLGIVSSEQMLKGWRFVILGAMVLGAILTPSTDPLTQSLLAGAVLGLYFGGIGCVRLLGK.

Transmembrane regions (helical) follow at residues 40–60, 82–104, 125–145, 172–192, 210–230, and 233–253; these read IFLS…FVKP, FFFV…FILY, VVLG…YALI, FVLL…IQVV, FVIL…DPLT, and LLAG…RLLG.

Belongs to the TatC family. In terms of assembly, forms a complex with TatA.

Its subcellular location is the cell inner membrane. Part of the twin-arginine translocation (Tat) system that transports large folded proteins containing a characteristic twin-arginine motif in their signal peptide across membranes. This chain is Sec-independent protein translocase protein TatC, found in Synechocystis sp. (strain ATCC 27184 / PCC 6803 / Kazusa).